Consider the following 498-residue polypeptide: ATP synthase subunit beta, chloroplastic (498 aa).

Position 172–179 (172–179) interacts with ATP; that stretch reads GGAGVGKT.

It belongs to the ATPase alpha/beta chains family. In terms of assembly, F-type ATPases have 2 components, CF(1) - the catalytic core - and CF(0) - the membrane proton channel. CF(1) has five subunits: alpha(3), beta(3), gamma(1), delta(1), epsilon(1). CF(0) has four main subunits: a(1), b(1), b'(1) and c(9-12).

The protein resides in the plastid. Its subcellular location is the chloroplast thylakoid membrane. It carries out the reaction ATP + H2O + 4 H(+)(in) = ADP + phosphate + 5 H(+)(out). In terms of biological role, produces ATP from ADP in the presence of a proton gradient across the membrane. The catalytic sites are hosted primarily by the beta subunits. This chain is ATP synthase subunit beta, chloroplastic, found in Nypa fruticans (Nypa palm).